A 135-amino-acid chain; its full sequence is RxLR effector protein PITG_02860 (135 aa).

The N-terminal stretch at 1 to 18 is a signal peptide; sequence MRLAFLLLAVSHFICGNA. The short motif at 48 to 64 is the RxLR-dEER element; the sequence is RKLLRTDERLSEANEER. An NRL1-binding domain region spans residues 126-135; sequence LKDPQAFRGP.

It belongs to the RxLR effector family. In terms of assembly, interacts with host ubiquitin E3 ligase NRL1.

Its subcellular location is the secreted. It localises to the host cytoplasm. The protein localises to the host nucleus. It is found in the host nucleoplasm. Effector that promotes P.infestans virulence and suppresses pattern-triggered immunity (PTI). Interacts with the host ubiquitin E3 ligase NRL1 and enhances the association between NRL1 and SWAP70 to promote proteasome-mediated degradation of SWAP70, which results in the suppression of immunity. This is RxLR effector protein PITG_02860 from Phytophthora infestans (strain T30-4) (Potato late blight agent).